We begin with the raw amino-acid sequence, 99 residues long: SAGA-associated factor 11 (99 aa).

The SGF11-type zinc finger occupies I71 to C92.

This sequence belongs to the SGF11 family. As to quaternary structure, component of the 1.8 MDa SAGA transcription coactivator-HAT complex. SAGA is built of 5 distinct domains with specialized functions. Within the SAGA complex, SUS1, SGF11, SGF73 and UBP8 form an additional subcomplex of SAGA called the DUB module (deubiquitination module). Interacts directly with SGF73, SUS1 and UBP8.

It is found in the nucleus. Functions as a component of the transcription regulatory histone acetylation (HAT) complex SAGA. At the promoters, SAGA is required for recruitment of the basal transcription machinery. It influences RNA polymerase II transcriptional activity through different activities such as TBP interaction and promoter selectivity, interaction with transcription activators, and chromatin modification through histone acetylation and deubiquitination. SAGA acetylates nucleosomal histone H3 to some extent (to form H3K9ac, H3K14ac, H3K18ac and H3K23ac). SAGA interacts with DNA via upstream activating sequences (UASs). Involved in transcriptional regulation of a subset of SAGA-regulated genes. Within the SAGA complex, participates in a subcomplex, that specifically deubiquitinates histones H2B. This Saccharomyces cerevisiae (strain YJM789) (Baker's yeast) protein is SAGA-associated factor 11.